A 226-amino-acid polypeptide reads, in one-letter code: MNRKIIAIIPASGIGSRMNAALPKQYLTLQGKTILEHTVAIFLNHPQIDKIVIALSANDQHHQHISLLTSDKIQLVNGGASRAESVFNALQSIDEHSWALVHDAARPCLKRSDLDKLLQITDQNGAILASPVVDTLKRAEGNKISHTEDRTTLWHALTPQFFPTALLKQALQQAFDRQQNVTDEASAMELAGYQPTLITGSNSNLKITRPEDLALAEFYLMHSLEK.

This sequence belongs to the IspD/TarI cytidylyltransferase family. IspD subfamily.

It catalyses the reaction 2-C-methyl-D-erythritol 4-phosphate + CTP + H(+) = 4-CDP-2-C-methyl-D-erythritol + diphosphate. It functions in the pathway isoprenoid biosynthesis; isopentenyl diphosphate biosynthesis via DXP pathway; isopentenyl diphosphate from 1-deoxy-D-xylulose 5-phosphate: step 2/6. In terms of biological role, catalyzes the formation of 4-diphosphocytidyl-2-C-methyl-D-erythritol from CTP and 2-C-methyl-D-erythritol 4-phosphate (MEP). The chain is 2-C-methyl-D-erythritol 4-phosphate cytidylyltransferase from Haemophilus ducreyi (strain 35000HP / ATCC 700724).